Here is a 7311-residue protein sequence, read N- to C-terminus: MAM and LDL-receptor class A domain-containing protein 2 (7311 aa).

16 consecutive MAM domains span residues 4 to 171 (AYCD…SCVT), 199 to 361 (LDCD…FCSP), 363 to 530 (KQCT…VCPP), 532 to 695 (GDCN…NCPV), 727 to 887 (YDCT…QCPV), 889 to 1050 (MQCS…ACPL), 1052 to 1220 (GDCT…RCRL), 1228 to 1392 (FDCN…SCPS), 1394 to 1557 (GMCS…SCPA), 1559 to 1722 (GDCS…NCIQ), 1755 to 1918 (NDCN…KCPS), 1920 to 2087 (TDCT…PCPL), 2089 to 2254 (GDCD…RCSV), 2274 to 2437 (NNCT…PCPP), 2439 to 2601 (TVCD…PCPP), and 2603 to 2771 (GSCD…YCVG). Positions 2461–2481 (WKRDSGGTPSAGTGPSRDHTT) are disordered. Over residues 2466-2475 (GGTPSAGTGP) the composition is skewed to low complexity. P-type domains follow at residues 2771–2817 (GLCS…FYHP) and 2818–2862 (SACA…FHGP). Cystine bridges form between C2773-C2802, C2784-C2801, C2795-C2813, C2820-C2847, C2831-C2846, and C2841-C2858. 4 consecutive MAM domains span residues 2883–3048 (WDCT…TCPP), 3050–3214 (RECD…PCPP), 3216–3384 (GSCD…FCPS), and 3429–3587 (GACT…NCTL). The 36-residue stretch at 3593–3628 (SCGQQHRCIRGSCIDRGRVCDYTDDCGDNSDEQNCY) folds into the LDL-receptor class A 1 domain. 3 cysteine pairs are disulfide-bonded: C3594-C3605, C3600-C3618, and C3612-C3627. In terms of domain architecture, MAM 21 spans 3632-3794 (YRCSFEKSLC…DLSMTSSCQS (163 aa)). 2 LDL-receptor class A domains span residues 3814 to 3850 (PCPR…VNCG) and 4016 to 4054 (SCIS…STCA). Disulfide bonds link C3815–C3827, C3822–C3840, and C3834–C3849. One can recognise an MAM 22 domain in the interval 3850–4011 (GSCSFEPGLC…DDVTFQGCAL (162 aa)). Cystine bridges form between C4017-C4029, C4024-C4042, and C4036-C4053. The MAM 23 domain maps to 4058-4221 (ERCNFEQDLC…DVSFTPNCRP (164 aa)). The LDL-receptor class A 4 domain occupies 4239-4276 (GCQPGKFKCANGGNCISVSKVCNFYSDCSGGSDEMNCP). Intrachain disulfides connect C4240/C4253, C4247/C4266, and C4260/C4275. Residues 4277 to 4438 (ATCNFQNSFC…DDVSFEHCAE (162 aa)) enclose the MAM 24 domain. Residues 4444–4483 (TCSGLSVFRCQSGHCIAMSGKCDFEPDCCDGSEETNIVCA) enclose the LDL-receptor class A 5 domain. Intrachain disulfides connect C4445–C4458, C4453–C4471, and C4465–C4482. The region spanning 4486–4646 (NRCNFEAGLC…DISFTPDCVV (161 aa)) is the MAM 25 domain. 2 consecutive LDL-receptor class A domains span residues 4660–4699 (PTQP…DLCG) and 4859–4899 (YCSG…QSCS). Cystine bridges form between C4668–C4687, C4681–C4698, C4860–C4876, C4871–C4889, and C4883–C4898. The MAM 26 domain maps to 4700 to 4862 (WPCDFQRGTC…NNYTLTYCSG (163 aa)). The region spanning 4903–5063 (SRCTFENGLC…SIAMKPSCQQ (161 aa)) is the MAM 27 domain. Positions 5085–5122 (NCVLPQVPCVSDGKCVSPSQVCDFNLDCADASDERSCP) constitute an LDL-receptor class A 8 domain. Intrachain disulfides connect C5086-C5099, C5093-C5112, and C5106-C5121. The MAM 28 domain occupies 5123–5281 (HMCTFESDQC…DDIKFVDCAL (159 aa)). The region spanning 5287 to 5322 (SCPSQFTCARNSCVSNDYVCDFNDDCGDGSDETLCG) is the LDL-receptor class A 9 domain. Cystine bridges form between C5288–C5299, C5294–C5312, and C5306–C5321. Residues 5326 to 5489 (TRCDFSRGSC…DVSFTTGCKQ (164 aa)) enclose the MAM 29 domain. The LDL-receptor class A 10 domain occupies 5513–5552 (QCTTAEFNCFNQGSGACIPSTQVCNFQPNCNDGVDEQNCA). 3 disulfide bridges follow: C5514–C5529, C5521–C5542, and C5536–C5551. The region spanning 5554 to 5719 (TKCSFDGGDF…DDIEFLNCVP (166 aa)) is the MAM 30 domain. The LDL-receptor class A 11 domain occupies 5725 to 5763 (KCTADEFQCARGGCIPKTSVCDFKADCMVGDVSDESSCS). Intrachain disulfides connect C5726–C5738, C5733–C5751, and C5745–C5762. In terms of domain architecture, MAM 31 spans 5768-5935 (GQCDFEHGLC…LTPGCQICTD (168 aa)). Residues 5957–5993 (PCSLQQYVCKNLRCVDKAQICNFKDDCGDNSDELPCG) form the LDL-receptor class A 12 domain. 3 disulfides stabilise this stretch: C5958–C5970, C5965–C5983, and C5977–C5992. Positions 5994–6156 (SNCTFEGDCY…DISFTDNCFV (163 aa)) constitute an MAM 32 domain. Positions 6014–6034 (NFHWRRRNGKTPSVGTGPTND) are disordered. A compositionally biased stretch (polar residues) spans 6023-6034 (KTPSVGTGPTND). The LDL-receptor class A 13 domain maps to 6161–6200 (TCTPNEVKCRTSGHCVAEQRVCDHVKDCNDGTDEDALICS). Intrachain disulfides connect C6162–C6175, C6169–C6188, and C6182–C6199. The MAM 33 domain occupies 6204-6365 (ASCDFDVNWC…DISFSAGCYK (162 aa)). The LDL-receptor class A 14 domain maps to 6377–6414 (RCSKVQFYCKADDLCINIHWKCDGEKDCTDGADEMLCP). 3 disulfide bridges follow: C6378-C6391, C6385-C6404, and C6398-C6413. MAM domains are found at residues 6430 to 6590 (ANCN…NCAK), 6606 to 6779 (LDED…NCDF), 6808 to 6965 (GDCT…QCQF), and 7173 to 7311 (GSCN…YNNL).

In terms of tissue distribution, component of the acid-insoluble and acid-soluble organic matrix of the aragonitic skeleton (at protein level).

The protein localises to the secreted. The protein is MAM and LDL-receptor class A domain-containing protein 2 of Acropora millepora (Staghorn coral).